The following is a 121-amino-acid chain: MSLKIRLARGGAKKRPYYRIVVADARSPRDGRFIEKIGTFNPLLAKDAAERVTLDTEKAKAWLEKGAQPTDRVARFLDAAGLLKREARNNPKKAEPGKKAQERAAERAAKAAEASEAASAE.

Residues 85 to 110 (REARNNPKKAEPGKKAQERAAERAAK) show a composition bias toward basic and acidic residues. Residues 85–121 (REARNNPKKAEPGKKAQERAAERAAKAAEASEAASAE) form a disordered region. Residues 111–121 (AAEASEAASAE) are compositionally biased toward low complexity.

The protein belongs to the bacterial ribosomal protein bS16 family.

The protein is Small ribosomal subunit protein bS16 of Azorhizobium caulinodans (strain ATCC 43989 / DSM 5975 / JCM 20966 / LMG 6465 / NBRC 14845 / NCIMB 13405 / ORS 571).